A 734-amino-acid chain; its full sequence is Homoaconitase, mitochondrial (734 aa).

Residues 1–25 (MGASNLLRFGAVTRISTPLLSRRSL) constitute a mitochondrion transit peptide. C367, C427, and C430 together coordinate [4Fe-4S] cluster.

This sequence belongs to the aconitase/IPM isomerase family. The cofactor is [4Fe-4S] cluster.

The protein localises to the mitochondrion. It carries out the reaction (2R,3S)-homoisocitrate = cis-homoaconitate + H2O. It participates in amino-acid biosynthesis; L-lysine biosynthesis via AAA pathway; L-alpha-aminoadipate from 2-oxoglutarate: step 3/5. Functionally, catalyzes the reversible hydration of cis-homoaconitate to (2R,3S)-homoisocitrate, a step in the alpha-aminoadipate pathway for lysine biosynthesis. This Mycosarcoma maydis (Corn smut fungus) protein is Homoaconitase, mitochondrial (LYS4).